The primary structure comprises 564 residues: Serine/threonine-protein kinase DBF20 (564 aa).

Residue Ser17 is modified to Phosphoserine. A disordered region spans residues 24–62; it reads LNIPKPTSPQAQYRPARKSENGRLTPGLPRSYKPCDSDD. One can recognise a Protein kinase domain in the interval 169 to 469; the sequence is FQILTQVGQG…FEQVRKMSYF (301 aa). ATP-binding positions include 175 to 183 and Lys198; that span reads VGQGGYGQV. The active-site Proton acceptor is the Asp292. A Phosphoserine modification is found at Ser366. One can recognise an AGC-kinase C-terminal domain in the interval 470–547; sequence AEINFETLRT…RHRDGKQGSS (78 aa). The residue at position 536 (Thr536) is a Phosphothreonine.

It belongs to the protein kinase superfamily. Ser/Thr protein kinase family.

It catalyses the reaction L-seryl-[protein] + ATP = O-phospho-L-seryl-[protein] + ADP + H(+). The enzyme catalyses L-threonyl-[protein] + ATP = O-phospho-L-threonyl-[protein] + ADP + H(+). Functionally, is probably a Ser/Thr-protein kinase that may function in initiation of DNA synthesis and also in late nuclear division. The sequence is that of Serine/threonine-protein kinase DBF20 (DBF20) from Saccharomyces cerevisiae (strain ATCC 204508 / S288c) (Baker's yeast).